Here is a 416-residue protein sequence, read N- to C-terminus: UDP-N-acetylmuramoylalanine--D-glutamate ligase (416 aa).

104-110 (GSNGKST) is a binding site for ATP.

It belongs to the MurCDEF family.

It localises to the cytoplasm. It carries out the reaction UDP-N-acetyl-alpha-D-muramoyl-L-alanine + D-glutamate + ATP = UDP-N-acetyl-alpha-D-muramoyl-L-alanyl-D-glutamate + ADP + phosphate + H(+). It functions in the pathway cell wall biogenesis; peptidoglycan biosynthesis. Functionally, cell wall formation. Catalyzes the addition of glutamate to the nucleotide precursor UDP-N-acetylmuramoyl-L-alanine (UMA). The polypeptide is UDP-N-acetylmuramoylalanine--D-glutamate ligase (Francisella tularensis subsp. tularensis (strain FSC 198)).